The sequence spans 287 residues: 4-hydroxybenzoate octaprenyltransferase (287 aa).

A run of 7 helical transmembrane segments spans residues 30 to 50 (ALWI…FALG), 92 to 112 (IAIA…LNGL), 133 to 153 (FFAI…PMAF), 158 to 178 (DTVP…SVAY), 207 to 227 (VLAI…LGAA), 232 to 252 (WPYW…YTLI), and 266 to 286 (HNNW…ALAV).

Belongs to the UbiA prenyltransferase family. Mg(2+) is required as a cofactor.

The protein localises to the cell inner membrane. It catalyses the reaction all-trans-octaprenyl diphosphate + 4-hydroxybenzoate = 4-hydroxy-3-(all-trans-octaprenyl)benzoate + diphosphate. The protein operates within cofactor biosynthesis; ubiquinone biosynthesis. Its function is as follows. Catalyzes the prenylation of para-hydroxybenzoate (PHB) with an all-trans polyprenyl group. Mediates the second step in the final reaction sequence of ubiquinone-8 (UQ-8) biosynthesis, which is the condensation of the polyisoprenoid side chain with PHB, generating the first membrane-bound Q intermediate 3-octaprenyl-4-hydroxybenzoate. The chain is 4-hydroxybenzoate octaprenyltransferase from Burkholderia mallei (strain NCTC 10247).